Here is a 310-residue protein sequence, read N- to C-terminus: Coproporphyrin III ferrochelatase (310 aa).

Fe-coproporphyrin III-binding positions include tyrosine 13, arginine 30, 46 to 47, serine 54, and tyrosine 125; that span reads RY. Residues histidine 181 and glutamate 262 each contribute to the Fe(2+) site.

The protein belongs to the ferrochelatase family.

It localises to the cytoplasm. The enzyme catalyses Fe-coproporphyrin III + 2 H(+) = coproporphyrin III + Fe(2+). It participates in porphyrin-containing compound metabolism; protoheme biosynthesis. Its function is as follows. Involved in coproporphyrin-dependent heme b biosynthesis. Catalyzes the insertion of ferrous iron into coproporphyrin III to form Fe-coproporphyrin III. In Halalkalibacterium halodurans (strain ATCC BAA-125 / DSM 18197 / FERM 7344 / JCM 9153 / C-125) (Bacillus halodurans), this protein is Coproporphyrin III ferrochelatase.